The sequence spans 110 residues: Large ribosomal subunit protein uL22 (110 aa).

This sequence belongs to the universal ribosomal protein uL22 family. In terms of assembly, part of the 50S ribosomal subunit.

Functionally, this protein binds specifically to 23S rRNA; its binding is stimulated by other ribosomal proteins, e.g. L4, L17, and L20. It is important during the early stages of 50S assembly. It makes multiple contacts with different domains of the 23S rRNA in the assembled 50S subunit and ribosome. Its function is as follows. The globular domain of the protein is located near the polypeptide exit tunnel on the outside of the subunit, while an extended beta-hairpin is found that lines the wall of the exit tunnel in the center of the 70S ribosome. This is Large ribosomal subunit protein uL22 from Histophilus somni (strain 2336) (Haemophilus somnus).